A 629-amino-acid polypeptide reads, in one-letter code: ATP-dependent RNA helicase DeaD (629 aa).

Residues 6-34 (TTFADLGLKAPILEALNDLGYEKPSPIQA) carry the Q motif motif. One can recognise a Helicase ATP-binding domain in the interval 37 to 208 (IPHLLNGRDV…RRFMKEPQEV (172 aa)). Position 50-57 (50-57 (AQTGSGKT)) interacts with ATP. The DEAD box motif lies at 156 to 159 (DEAD). Residues 232–379 (KNEALVRFLE…EVELPNAELL (148 aa)) enclose the Helicase C-terminal domain. Disordered stretches follow at residues 438 to 481 (LIVP…RERR) and 560 to 629 (LGDA…GGDA). Composition is skewed to basic and acidic residues over residues 446–481 (MRPK…RERR) and 568–629 (GGER…GGDA).

It belongs to the DEAD box helicase family. DeaD/CsdA subfamily. As to quaternary structure, interacts with the 50S ribosomal subunit upon shifting to 15 degrees Celsius. Also found associated with the RNA degradosome at 15 degrees Celsius; binds RNase E (rne).

It localises to the cytoplasm. It carries out the reaction ATP + H2O = ADP + phosphate + H(+). Functionally, DEAD-box RNA helicase involved in various cellular processes at low temperature, including ribosome biogenesis, mRNA degradation and translation initiation. Exhibits RNA-stimulated ATP hydrolysis and RNA unwinding activity at low temperature. Involved in 50S ribosomal subunit assembly, acting after SrmB, and could also play a role in the biogenesis of the 30S ribosomal subunit. In addition, is involved in mRNA decay, via formation of a cold-shock degradosome with RNase E. Also stimulates translation of some mRNAs, probably at the level of initiation. This Escherichia coli (strain K12) protein is ATP-dependent RNA helicase DeaD.